The sequence spans 203 residues: dITP/XTP pyrophosphatase (203 aa).

8–13 serves as a coordination point for substrate; that stretch reads TANKGK. The Mg(2+) site is built by E41 and D70. The active-site Proton acceptor is D70. Substrate is bound by residues S71, 153 to 156, K176, and 181 to 182; these read FGYD and HR.

This sequence belongs to the HAM1 NTPase family. Homodimer. Mg(2+) serves as cofactor.

It catalyses the reaction XTP + H2O = XMP + diphosphate + H(+). It carries out the reaction dITP + H2O = dIMP + diphosphate + H(+). The enzyme catalyses ITP + H2O = IMP + diphosphate + H(+). Its function is as follows. Pyrophosphatase that catalyzes the hydrolysis of nucleoside triphosphates to their monophosphate derivatives, with a high preference for the non-canonical purine nucleotides XTP (xanthosine triphosphate), dITP (deoxyinosine triphosphate) and ITP. Seems to function as a house-cleaning enzyme that removes non-canonical purine nucleotides from the nucleotide pool, thus preventing their incorporation into DNA/RNA and avoiding chromosomal lesions. In Listeria monocytogenes serotype 4b (strain F2365), this protein is dITP/XTP pyrophosphatase.